The following is a 376-amino-acid chain: S-adenosylmethionine synthase (376 aa).

His15 contacts ATP. Asp17 is a binding site for Mg(2+). Position 43 (Glu43) interacts with K(+). L-methionine-binding residues include Glu56 and Gln92. The flexible loop stretch occupies residues 92–102 (QSKEIANQVDR). ATP is bound by residues 156–158 (DMK), Asp231, 237–238 (RK), Ala254, and Lys258. Asp231 contacts L-methionine. Residue Lys262 participates in L-methionine binding.

Belongs to the AdoMet synthase family. In terms of assembly, homotetramer; dimer of dimers. Mg(2+) serves as cofactor. The cofactor is K(+).

It is found in the cytoplasm. The enzyme catalyses L-methionine + ATP + H2O = S-adenosyl-L-methionine + phosphate + diphosphate. It functions in the pathway amino-acid biosynthesis; S-adenosyl-L-methionine biosynthesis; S-adenosyl-L-methionine from L-methionine: step 1/1. Its function is as follows. Catalyzes the formation of S-adenosylmethionine (AdoMet) from methionine and ATP. The overall synthetic reaction is composed of two sequential steps, AdoMet formation and the subsequent tripolyphosphate hydrolysis which occurs prior to release of AdoMet from the enzyme. The sequence is that of S-adenosylmethionine synthase from Mycoplasmopsis pulmonis (strain UAB CTIP) (Mycoplasma pulmonis).